Reading from the N-terminus, the 238-residue chain is Ion-translocating oxidoreductase complex subunit E (238 aa).

The next 5 membrane-spanning stretches (helical) occupy residues 41–61 (LGLG…VSLV), 71–91 (LPAF…LMQA), 95–115 (ELYQ…VILG), 130–150 (SFDG…LGGL), and 184–204 (GFLL…LIAL).

It belongs to the NqrDE/RnfAE family. As to quaternary structure, the complex is composed of six subunits: RnfA, RnfB, RnfC, RnfD, RnfE and RnfG.

It is found in the cell inner membrane. Functionally, part of a membrane-bound complex that couples electron transfer with translocation of ions across the membrane. This Pseudomonas aeruginosa (strain LESB58) protein is Ion-translocating oxidoreductase complex subunit E.